A 919-amino-acid chain; its full sequence is Probable dipeptidyl-aminopeptidase B (919 aa).

Over residues 1 to 10 the composition is skewed to basic and acidic residues; the sequence is MRRSDGHEET. Positions 1-53 are disordered; it reads MRRSDGHEETSEFLPMTHSRSVSAASQTSTDSSLSTESLFPREQKPFPNAMGG. Over 1 to 92 the chain is Cytoplasmic; it reads MRRSDGHEET…AATGGGRARR (92 aa). Residues 21–38 are compositionally biased toward low complexity; that stretch reads SVSAASQTSTDSSLSTES. Residues 93–113 traverse the membrane as a helical; Signal-anchor for type II membrane protein segment; that stretch reads IFWILVLLCLGGWLLAFVLFL. At 114 to 919 the chain is on the vacuolar side; sequence TGGRANYQTA…MKRSLRLLSP (806 aa). N-linked (GlcNAc...) asparagine glycans are attached at residues Asn-200, Asn-352, and Asn-643. Ser-757 serves as the catalytic Charge relay system. Residue Asn-811 is glycosylated (N-linked (GlcNAc...) asparagine). Active-site charge relay system residues include Asp-834 and His-867.

This sequence belongs to the peptidase S9B family.

Its subcellular location is the vacuole membrane. The enzyme catalyses Release of an N-terminal dipeptide, Xaa-Yaa-|-Zaa-, from a polypeptide, preferentially when Yaa is Pro, provided Zaa is neither Pro nor hydroxyproline.. Functionally, type IV dipeptidyl-peptidase which removes N-terminal dipeptides sequentially from polypeptides having unsubstituted N-termini provided that the penultimate residue is proline. The protein is Probable dipeptidyl-aminopeptidase B (dapB) of Aspergillus fumigatus (strain CBS 144.89 / FGSC A1163 / CEA10) (Neosartorya fumigata).